A 199-amino-acid chain; its full sequence is Superoxide dismutase [Mn/Fe] (199 aa).

Residues His-27, His-81, Asp-161, and His-165 each contribute to the Fe(3+) site. Positions 27, 81, 161, and 165 each coordinate Mn(2+).

It belongs to the iron/manganese superoxide dismutase family. In terms of assembly, homodimer. Requires Mn(2+) as cofactor. The cofactor is Fe(3+).

It carries out the reaction 2 superoxide + 2 H(+) = H2O2 + O2. Destroys superoxide anion radicals which are normally produced within the cells and which are toxic to biological systems. Catalyzes the dismutation of superoxide anion radicals into O2 and H2O2 by successive reduction and oxidation of the transition metal ion at the active site. In Staphylococcus saprophyticus subsp. saprophyticus (strain ATCC 15305 / DSM 20229 / NCIMB 8711 / NCTC 7292 / S-41), this protein is Superoxide dismutase [Mn/Fe] (sodA).